We begin with the raw amino-acid sequence, 191 residues long: Xanthine phosphoribosyltransferase (191 aa).

2 residues coordinate xanthine: leucine 20 and asparagine 27. 128–132 (ANGQA) contributes to the 5-phospho-alpha-D-ribose 1-diphosphate binding site. A xanthine-binding site is contributed by lysine 156.

The protein belongs to the purine/pyrimidine phosphoribosyltransferase family. Xpt subfamily. Homodimer.

The protein localises to the cytoplasm. The enzyme catalyses XMP + diphosphate = xanthine + 5-phospho-alpha-D-ribose 1-diphosphate. It functions in the pathway purine metabolism; XMP biosynthesis via salvage pathway; XMP from xanthine: step 1/1. Functionally, converts the preformed base xanthine, a product of nucleic acid breakdown, to xanthosine 5'-monophosphate (XMP), so it can be reused for RNA or DNA synthesis. The sequence is that of Xanthine phosphoribosyltransferase from Levilactobacillus brevis (strain ATCC 367 / BCRC 12310 / CIP 105137 / JCM 1170 / LMG 11437 / NCIMB 947 / NCTC 947) (Lactobacillus brevis).